A 135-amino-acid polypeptide reads, in one-letter code: uncharacterized protein (135 aa).

Positions 2–71 (TYTTAKAAEK…LKDIKRFAEC (70 aa)) constitute an HTH merR-type domain. Residues 5–24 (TAKAAEKIGISAYTLRFYDK) constitute a DNA-binding region (H-T-H motif).

This is an uncharacterized protein from Haemophilus influenzae (strain ATCC 51907 / DSM 11121 / KW20 / Rd).